The following is a 198-amino-acid chain: (S)-2-hydroxypropylphosphonic acid epoxidase (198 aa).

The HTH cro/C1-type domain occupies 15-70 (LKDRREQVKMDHAALASLLGETPETVAAWENGEGGELTLTQLGRIAHVLGTSIGAL). K23 contributes to the substrate binding site. A DNA-binding region (H-T-H motif) is located at residues 26–45 (HAALASLLGETPETVAAWEN). Residues R97, Y105, 135-138 (NSGH), and E142 each bind substrate. A Cupin type-2 domain is found at 136–196 (SGHAGNEFLF…GTGSAKLIAV (61 aa)). 3 residues coordinate Fe cation: H138, E142, and H180.

This sequence belongs to the non-heme iron-dependent dioxygenase family. Homotetramer. Fe(2+) serves as cofactor.

The catalysed reaction is (S)-2-hydroxypropylphosphonate + H2O2 = (1R,2S)-epoxypropylphosphonate + 2 H2O. Its pathway is antibiotic biosynthesis; fosfomycin biosynthesis. Functionally, non-heme-dependent dioxygenase that catalyzes the oxidative epoxidation of (S)-2-hydroxypropylphosphonate into (1R,2S)-epoxypropylphosphonate, the final step in the biosynthesis of fosfomycin antibiotic. The protein is (S)-2-hydroxypropylphosphonic acid epoxidase (hppE) of Streptomyces wedmorensis.